Consider the following 137-residue polypeptide: Fluoride-specific ion channel FluC 4 (137 aa).

The next 4 membrane-spanning stretches (helical) occupy residues 20-40 (AAIG…ILGA), 43-63 (LWGT…FATL), 83-103 (GLCG…LLVL), and 110-130 (ALAY…LGLI). Positions 86 and 89 each coordinate Na(+).

The protein belongs to the fluoride channel Fluc/FEX (TC 1.A.43) family.

It is found in the cell inner membrane. It catalyses the reaction fluoride(in) = fluoride(out). Na(+) is not transported, but it plays an essential structural role and its presence is essential for fluoride channel function. Fluoride-specific ion channel. Important for reducing fluoride concentration in the cell, thus reducing its toxicity. This chain is Fluoride-specific ion channel FluC 4, found in Brucella suis biovar 1 (strain 1330).